The following is a 489-amino-acid chain: Coronin-1B (489 aa).

S2 carries the phosphoserine; by PKC modification. 6 WD repeats span residues 18-72, 73-122, 123-166, 167-210, 211-256, and 257-296; these read QPVK…GRID, KAYP…SPLT, EPVV…GTAE, ELYR…RGTL, VAER…ENLE, and EPMALQELDSSNGALLPFYDPDTSVVYVCGKGDSSIRYFE. The segment at 408-444 is disordered; it reads RRNVLSDSRPAMAPGSSHLGAPASTTTAADATPSGSL. Low complexity predominate over residues 428-441; sequence APASTTTAADATPS. Residues 449–474 adopt a coiled-coil conformation; that stretch reads EAGKLEEVMQELRALRALVKEQGDRI.

This sequence belongs to the WD repeat coronin family. In terms of assembly, forms homooligomers, but does not form complexes with the other coronins. Interacts with Arp2/3 complex components, including ACTR2, ARPC1B and ARPC2. Binds actin. Phosphorylation by PKC on Ser-2 regulates the interaction with the Arp2/3 complex and cell motility in fibroblasts. Phosphorylation does not seem to affect subcellular location.

Its subcellular location is the cytoplasm. It localises to the cytoskeleton. The protein resides in the stress fiber. Regulates leading edge dynamics and cell motility in fibroblasts. May be involved in cytokinesis and signal transduction. This chain is Coronin-1B (CORO1B), found in Homo sapiens (Human).